We begin with the raw amino-acid sequence, 212 residues long: High frequency lysogenization protein HflD homolog (212 aa).

The protein belongs to the HflD family.

The protein resides in the cytoplasm. It localises to the cell inner membrane. The protein is High frequency lysogenization protein HflD homolog of Pectobacterium carotovorum subsp. carotovorum (strain PC1).